Here is a 422-residue protein sequence, read N- to C-terminus: G-protein coupled receptor 83 (422 aa).

The N-terminal stretch at Met-1–Ala-17 is a signal peptide. The Extracellular segment spans residues Thr-18–Lys-70. The helical transmembrane segment at Ala-71–Val-91 threads the bilayer. The Cytoplasmic segment spans residues Cys-92–Ser-106. The chain crosses the membrane as a helical span at residues Leu-107–Thr-127. Residues Leu-128 to Cys-143 lie on the Extracellular side of the membrane. An intrachain disulfide couples Cys-143 to Cys-223. Residues His-144–Val-166 form a helical membrane-spanning segment. Topologically, residues Asp-167–Lys-184 are cytoplasmic. The helical transmembrane segment at Gly-185–Ile-205 threads the bilayer. The Extracellular segment spans residues Cys-206–Lys-236. Residues Tyr-237 to Ala-257 traverse the membrane as a helical segment. At Tyr-258 to Met-292 the chain is on the cytoplasmic side. The chain crosses the membrane as a helical span at residues Leu-293 to Leu-313. Residues Leu-314–Tyr-326 are Extracellular-facing. A helical membrane pass occupies residues Phe-327–Leu-347. At Asn-348–Ser-422 the chain is on the cytoplasmic side. Positions Pro-401 to Ser-422 are disordered.

The protein belongs to the G-protein coupled receptor 1 family. Expressed preferentially in brain, and its neuronal expression is relegated to limbic brain regions, particularly in forebrain.

Its subcellular location is the cell membrane. Its function is as follows. G-protein coupled receptor for PEN, a neuropeptide produced from the precursor protein, proSAAS (encoded by PCSK1N). Acts through a G(i)- and G(q)-alpha-alpha-mediated pathway in response to PEN. Plays a role in food intake and body weight regulation. May contribute to the regulation of anxiety-related behaviors. This is G-protein coupled receptor 83 from Rattus norvegicus (Rat).